The primary structure comprises 541 residues: Zinc finger protein 329 (541 aa).

S50 is modified (phosphoserine). 12 consecutive C2H2-type zinc fingers follow at residues 203-225 (YRCT…HRTH), 231-253 (YTCN…QRIH), 259-281 (YECS…QRIH), 287-309 (YECL…QRTH), 315-337 (YRCN…LRIH), 343-365 (YECS…ERTH), 371-393 (FECA…QKIH), 399-421 (YECK…QRIH), 427-449 (YGCN…QRTH), 455-477 (YECN…QRIH), 483-505 (YQCP…QRLH), and 511-533 (SRCP…QRAH).

The protein belongs to the krueppel C2H2-type zinc-finger protein family.

It is found in the nucleus. May be involved in transcriptional regulation. This chain is Zinc finger protein 329 (ZNF329), found in Homo sapiens (Human).